Consider the following 580-residue polypeptide: Arginine--tRNA ligase (580 aa).

A 'HIGH' region motif is present at residues 131 to 141 (ANPTGPMHVGH).

This sequence belongs to the class-I aminoacyl-tRNA synthetase family. Monomer.

Its subcellular location is the cytoplasm. It carries out the reaction tRNA(Arg) + L-arginine + ATP = L-arginyl-tRNA(Arg) + AMP + diphosphate. This Cereibacter sphaeroides (strain ATCC 17029 / ATH 2.4.9) (Rhodobacter sphaeroides) protein is Arginine--tRNA ligase.